The chain runs to 163 residues: Globin CTT-Z (163 aa).

The signal sequence occupies residues 1–16 (MKFFAVLALCIVGAIA). Residues 18–162 (PLTSDEAALV…VYTAVFQIVT (145 aa)) form the Globin domain. Histidine 76 and histidine 111 together coordinate heme b.

This sequence belongs to the globin family.

The protein is Globin CTT-Z (CTT-Z) of Chironomus thummi piger (Midge).